We begin with the raw amino-acid sequence, 515 residues long: 4-hydroxybenzoate brominase (decarboxylating) (515 aa).

FAD-binding residues include serine 13, glutamate 32, valine 40, phenylalanine 41, histidine 51, valine 102, and glutamine 364.

This sequence belongs to the FMO family. It depends on FAD as a cofactor.

It carries out the reaction 2 bromide + 4-hydroxybenzoate + 2 NADPH + 2 O2 + 5 H(+) = 2,4-dibromophenol + CO2 + 2 NADP(+) + 4 H2O. It catalyses the reaction bromide + 4-hydroxybenzoate + NADPH + O2 + 2 H(+) = 3-bromo-4-hydroxybenzoate + NADP(+) + 2 H2O. The catalysed reaction is 3-bromo-4-hydroxybenzoate + bromide + NADPH + O2 + 3 H(+) = 2,4-dibromophenol + CO2 + NADP(+) + 2 H2O. The enzyme catalyses 3,4-dihydroxybenzoate + 2 bromide + 2 NADPH + 2 O2 + 5 H(+) = 3,5-dibromobenzene-1,2-diol + CO2 + 2 NADP(+) + 4 H2O. It carries out the reaction 3,4-dihydroxybenzoate + bromide + NADPH + O2 + 2 H(+) = 3-bromo-4,5-dihydroxybenzoate + NADP(+) + 2 H2O. It catalyses the reaction 3-bromo-4,5-dihydroxybenzoate + bromide + NADPH + O2 + 3 H(+) = 3,5-dibromobenzene-1,2-diol + CO2 + NADP(+) + 2 H2O. Activity is abolished in the absence of either bromide or NADPH, while a partial reduction in activity is observed upon omission of FAD. Activity does not require the addition of a flavin reductase to regenerate FADH(2) in situ. Brominase involved in the biosynthesis of polybrominated aromatic organic compounds. Catalyzes the bromination of 4-hydroxybenzoate (4-HBA) to 3-bromo-4-hydroxybenzoate, followed by bromination and decarboxylation of 3-bromo-4-hydroxybenzoate to 2,4-dibromophenol. Can also use 3,4-dihydroxybenzoate, with lower efficiency, forming 3-bromo-4,5-dihydroxybenzoate and 3,5-dibromobenzene-1,2-diol. Can utilize iodide in vivo leading to the formation of iodophenols, but cannot use chloride. This Pseudoalteromonas luteoviolacea (strain 2ta16) protein is 4-hydroxybenzoate brominase (decarboxylating).